The primary structure comprises 512 residues: Glutamate--tRNA ligase (512 aa).

The 'HIGH' region signature appears at 11-21; sequence PSPTGALHIGG. Residues 263–267 carry the 'KMSKS' region motif; that stretch reads KLSKR. ATP is bound at residue Lys-266.

This sequence belongs to the class-I aminoacyl-tRNA synthetase family. Glutamate--tRNA ligase type 1 subfamily. As to quaternary structure, monomer.

The protein localises to the cytoplasm. The enzyme catalyses tRNA(Glu) + L-glutamate + ATP = L-glutamyl-tRNA(Glu) + AMP + diphosphate. Catalyzes the attachment of glutamate to tRNA(Glu) in a two-step reaction: glutamate is first activated by ATP to form Glu-AMP and then transferred to the acceptor end of tRNA(Glu). This Amoebophilus asiaticus (strain 5a2) protein is Glutamate--tRNA ligase.